A 257-amino-acid polypeptide reads, in one-letter code: Ras-related protein Rab-26 (257 aa).

A disordered region spans residues 1-53; that stretch reads MSRKKTPKSKGGSVPAASTLPAAANGPRLAHPRTARPGPEAPPNGPPQSGRPS. The GTP site is built by Ser-73, Gly-74, Val-75, Gly-76, Lys-77, Thr-78, Cys-79, Ser-96, and Thr-97. Residue Thr-78 coordinates Mg(2+). Short sequence motifs (switch) lie at residues 87–102 and 120–137; these read GAFL…GIDF and DTAG…YYRD. Positions 97 and 120 each coordinate Mg(2+). GTP is bound by residues Gly-123, Asn-178, Lys-179, Asp-181, Ala-209, and Lys-210. S-geranylgeranyl cysteine attachment occurs at residues Cys-254 and Cys-255.

The protein belongs to the small GTPase superfamily. Rab family. In terms of assembly, interacts with ADRA2B. Interacts with RIMS1. It depends on Mg(2+) as a cofactor. In terms of tissue distribution, expressed in pancreas, kidney, brain, submandibular gland, and lung.

The protein resides in the cytoplasmic vesicle. It localises to the secretory vesicle membrane. It is found in the golgi apparatus membrane. It catalyses the reaction GTP + H2O = GDP + phosphate + H(+). With respect to regulation, regulated by guanine nucleotide exchange factors (GEFs) which promote the exchange of bound GDP for free GTP. Regulated by GTPase activating proteins (GAPs) which increase the GTP hydrolysis activity. Inhibited by GDP dissociation inhibitors (GDIs). In terms of biological role, the small GTPases Rab are key regulators of intracellular membrane trafficking, from the formation of transport vesicles to their fusion with membranes. Rabs cycle between an inactive GDP-bound form and an active GTP-bound form that is able to recruit to membranes different set of downstream effectors directly responsible for vesicle formation, movement, tethering and fusion. RAB26 mediates transport of ADRA2A and ADRA2B from the Golgi to the cell membrane. Plays a role in the maturation of zymogenic granules and in pepsinogen secretion in the stomach. Plays a role in the secretion of amylase from acinar granules in the parotid gland. This Rattus norvegicus (Rat) protein is Ras-related protein Rab-26.